Reading from the N-terminus, the 243-residue chain is Zinc import ATP-binding protein ZnuC 2 (243 aa).

Residues 3–218 (LSLHQLSVKF…PEYKVLFGLD (216 aa)) enclose the ABC transporter domain. Position 35-42 (35-42 (GPNGSGKS)) interacts with ATP.

Belongs to the ABC transporter superfamily. Zinc importer (TC 3.A.1.15.5) family. As to quaternary structure, the complex is composed of two ATP-binding proteins (ZnuC), two transmembrane proteins (ZnuB) and a solute-binding protein (ZnuA).

It localises to the cell inner membrane. It catalyses the reaction Zn(2+)(out) + ATP(in) + H2O(in) = Zn(2+)(in) + ADP(in) + phosphate(in) + H(+)(in). Part of the ABC transporter complex ZnuABC involved in zinc import. Responsible for energy coupling to the transport system. The protein is Zinc import ATP-binding protein ZnuC 2 of Aliivibrio fischeri (strain ATCC 700601 / ES114) (Vibrio fischeri).